Reading from the N-terminus, the 156-residue chain is MNIIEGAITAPHANVAIIVSRFNSFINDSLLSGALDALQRQGLVKESNITVVRCPGAYELPLLAQQLAKKGSYDAIIALGSVIRGGTPHFEYVAGECNKGLAQIALEHQIPVAFGVLTVDSIEQAIERAGTKMGNKGAEAALSALEMINVLAEIEP.

Residues Phe-22, 57-59 (AYE), and 81-83 (SVI) contribute to the 5-amino-6-(D-ribitylamino)uracil site. A (2S)-2-hydroxy-3-oxobutyl phosphate-binding site is contributed by 86-87 (GT). His-89 serves as the catalytic Proton donor. Position 114 (Phe-114) interacts with 5-amino-6-(D-ribitylamino)uracil. Residue Arg-128 participates in (2S)-2-hydroxy-3-oxobutyl phosphate binding.

It belongs to the DMRL synthase family. As to quaternary structure, forms an icosahedral capsid composed of 60 subunits, arranged as a dodecamer of pentamers.

The catalysed reaction is (2S)-2-hydroxy-3-oxobutyl phosphate + 5-amino-6-(D-ribitylamino)uracil = 6,7-dimethyl-8-(1-D-ribityl)lumazine + phosphate + 2 H2O + H(+). The protein operates within cofactor biosynthesis; riboflavin biosynthesis; riboflavin from 2-hydroxy-3-oxobutyl phosphate and 5-amino-6-(D-ribitylamino)uracil: step 1/2. In terms of biological role, catalyzes the formation of 6,7-dimethyl-8-ribityllumazine by condensation of 5-amino-6-(D-ribitylamino)uracil with 3,4-dihydroxy-2-butanone 4-phosphate. This is the penultimate step in the biosynthesis of riboflavin. The polypeptide is 6,7-dimethyl-8-ribityllumazine synthase (Photobacterium leiognathi).